The chain runs to 33 residues: Rugosin-B (33 aa).

An intrachain disulfide couples Cys27 to Cys33.

The protein belongs to the frog skin active peptide (FSAP) family. Brevinin subfamily. Expressed by the skin glands.

It localises to the secreted. Shows antibacterial activity against both Gram-negative and Gram-positive bacteria. This Glandirana rugosa (Japanese wrinkled frog) protein is Rugosin-B.